We begin with the raw amino-acid sequence, 468 residues long: Na(+)/H(+) antiporter NhaA (468 aa).

The next 12 helical transmembrane spans lie at 28 to 48 (FLHVEAVSGAVLLAAAAIALV), 79 to 99 (LHFWINDALMTLFFLAVGMEI), 115 to 135 (ALPLAAALGGVVAPALIYLAF), 143 to 163 (AGWAVPTATDIAFAVGVLALL), 173 to 193 (IFLLALAIIDDIIAVLIIAFF), 196 to 216 (GGLDYSGFAVAALGIAIVLGL), 219 to 239 (IGIGTAYAYVLPGAIVWTGLL), 240 to 260 (MTGAHPTLAGVVLGLMTPVVP), 317 to 337 (ALHPWVAYAIMPLFALANAGV), 356 to 376 (VAGALIVGKPAGVIAMSWLLV), 392 to 412 (IVLIGLLAGVGFTMSIFIAML), and 426 to 446 (LGVLLGSLATAMLGLAWGAIY).

Belongs to the NhaA Na(+)/H(+) (TC 2.A.33) antiporter family.

It is found in the cell inner membrane. It catalyses the reaction Na(+)(in) + 2 H(+)(out) = Na(+)(out) + 2 H(+)(in). Na(+)/H(+) antiporter that extrudes sodium in exchange for external protons. The chain is Na(+)/H(+) antiporter NhaA from Bordetella petrii (strain ATCC BAA-461 / DSM 12804 / CCUG 43448).